The sequence spans 675 residues: Metal-nicotianamine transporter YSL3 (675 aa).

14 helical membrane passes run Ile-42–Met-62, Leu-66–Leu-86, Cys-114–Leu-134, Gly-159–Val-179, Val-219–Phe-239, Ile-280–Ile-300, Val-325–Phe-345, Ile-386–Ile-406, Ile-408–Leu-428, Val-450–Val-470, Val-504–Phe-524, Phe-556–Ala-576, Phe-602–Trp-622, and Ala-630–Leu-650.

This sequence belongs to the YSL (TC 2.A.67.2) family. As to expression, expressed in leaves, anthers and pollen grains. Restricted to the vasculature.

Its subcellular location is the membrane. Its function is as follows. May be involved in the lateral transport of nicotianamine-chelated metals in the vasculature. In Arabidopsis thaliana (Mouse-ear cress), this protein is Metal-nicotianamine transporter YSL3 (YSL3).